We begin with the raw amino-acid sequence, 372 residues long: tRNA-specific 2-thiouridylase MnmA (372 aa).

Residues 6–13 (AMSGGVDS) and L32 contribute to the ATP site. C101 acts as the Nucleophile in catalysis. An intrachain disulfide couples C101 to C193. An ATP-binding site is contributed by G125. The interval 143–145 (KDQ) is interaction with tRNA. C193 (cysteine persulfide intermediate) is an active-site residue.

It belongs to the MnmA/TRMU family.

It localises to the cytoplasm. The catalysed reaction is S-sulfanyl-L-cysteinyl-[protein] + uridine(34) in tRNA + AH2 + ATP = 2-thiouridine(34) in tRNA + L-cysteinyl-[protein] + A + AMP + diphosphate + H(+). Functionally, catalyzes the 2-thiolation of uridine at the wobble position (U34) of tRNA, leading to the formation of s(2)U34. The sequence is that of tRNA-specific 2-thiouridylase MnmA from Corynebacterium kroppenstedtii (strain DSM 44385 / JCM 11950 / CIP 105744 / CCUG 35717).